Here is a 342-residue protein sequence, read N- to C-terminus: GTPase Obg (342 aa).

The 159-residue stretch at 1–159 (MQFIDQAKIE…KQLRLELKLL (159 aa)) folds into the Obg domain. In terms of domain architecture, OBG-type G spans 160–330 (AEVGIIGLPN…MLQEIWGILD (171 aa)). GTP contacts are provided by residues 166–173 (GLPNAGKS), 191–195 (FTTLI), 213–216 (DIPG), 280–283 (NKID), and 311–313 (SAV). Positions 173 and 193 each coordinate Mg(2+).

Belongs to the TRAFAC class OBG-HflX-like GTPase superfamily. OBG GTPase family. As to quaternary structure, monomer. It depends on Mg(2+) as a cofactor.

It localises to the cytoplasm. In terms of biological role, an essential GTPase which binds GTP, GDP and possibly (p)ppGpp with moderate affinity, with high nucleotide exchange rates and a fairly low GTP hydrolysis rate. Plays a role in control of the cell cycle, stress response, ribosome biogenesis and in those bacteria that undergo differentiation, in morphogenesis control. This chain is GTPase Obg, found in Nostoc punctiforme (strain ATCC 29133 / PCC 73102).